The primary structure comprises 242 residues: Probable transcriptional regulatory protein lhv_0777 (242 aa).

The tract at residues 1-22 (MSGHSKWHNIQGRKNAQDAKRG) is disordered.

This sequence belongs to the TACO1 family.

The protein localises to the cytoplasm. This chain is Probable transcriptional regulatory protein lhv_0777, found in Lactobacillus helveticus (strain DPC 4571).